The sequence spans 405 residues: Riboflavin biosynthesis protein RibBA (405 aa).

Residues Met1–Lys205 are DHBP synthase. Residues Arg30 to Glu31, Asp35, Arg144 to Thr148, and Glu168 each bind D-ribulose 5-phosphate. Glu31 contributes to the Mg(2+) binding site. His147 serves as a coordination point for Mg(2+). The tract at residues Gln206 to Lys405 is GTP cyclohydrolase II. Arg256–Ser260 is a binding site for GTP. The Zn(2+) site is built by Cys261, Cys272, and Cys274. Residues Gln277, Glu299–Arg301, and Thr321 contribute to the GTP site. Residue Asp333 is the Proton acceptor; for GTP cyclohydrolase activity of the active site. Arg335 (nucleophile; for GTP cyclohydrolase activity) is an active-site residue. Positions 356 and 361 each coordinate GTP.

The protein in the N-terminal section; belongs to the DHBP synthase family. This sequence in the C-terminal section; belongs to the GTP cyclohydrolase II family. Mg(2+) serves as cofactor. Mn(2+) is required as a cofactor. Requires Zn(2+) as cofactor.

It catalyses the reaction D-ribulose 5-phosphate = (2S)-2-hydroxy-3-oxobutyl phosphate + formate + H(+). It carries out the reaction GTP + 4 H2O = 2,5-diamino-6-hydroxy-4-(5-phosphoribosylamino)-pyrimidine + formate + 2 phosphate + 3 H(+). It participates in cofactor biosynthesis; riboflavin biosynthesis; 2-hydroxy-3-oxobutyl phosphate from D-ribulose 5-phosphate: step 1/1. The protein operates within cofactor biosynthesis; riboflavin biosynthesis; 5-amino-6-(D-ribitylamino)uracil from GTP: step 1/4. Catalyzes the conversion of D-ribulose 5-phosphate to formate and 3,4-dihydroxy-2-butanone 4-phosphate. Functionally, catalyzes the conversion of GTP to 2,5-diamino-6-ribosylamino-4(3H)-pyrimidinone 5'-phosphate (DARP), formate and pyrophosphate. The chain is Riboflavin biosynthesis protein RibBA from Porphyromonas gingivalis (strain ATCC 33277 / DSM 20709 / CIP 103683 / JCM 12257 / NCTC 11834 / 2561).